A 385-amino-acid polypeptide reads, in one-letter code: Arginine biosynthesis bifunctional protein ArgJ (385 aa).

Threonine 142, lysine 168, threonine 179, glutamate 259, asparagine 380, and threonine 385 together coordinate substrate. Threonine 179 acts as the Nucleophile in catalysis.

Belongs to the ArgJ family. As to quaternary structure, heterotetramer of two alpha and two beta chains.

It is found in the cytoplasm. The enzyme catalyses N(2)-acetyl-L-ornithine + L-glutamate = N-acetyl-L-glutamate + L-ornithine. It carries out the reaction L-glutamate + acetyl-CoA = N-acetyl-L-glutamate + CoA + H(+). It functions in the pathway amino-acid biosynthesis; L-arginine biosynthesis; L-ornithine and N-acetyl-L-glutamate from L-glutamate and N(2)-acetyl-L-ornithine (cyclic): step 1/1. Its pathway is amino-acid biosynthesis; L-arginine biosynthesis; N(2)-acetyl-L-ornithine from L-glutamate: step 1/4. Functionally, catalyzes two activities which are involved in the cyclic version of arginine biosynthesis: the synthesis of N-acetylglutamate from glutamate and acetyl-CoA as the acetyl donor, and of ornithine by transacetylation between N(2)-acetylornithine and glutamate. This Leptospira interrogans serogroup Icterohaemorrhagiae serovar copenhageni (strain Fiocruz L1-130) protein is Arginine biosynthesis bifunctional protein ArgJ.